The sequence spans 607 residues: Glutamine--fructose-6-phosphate aminotransferase [isomerizing] (607 aa).

Cys-2 acts as the Nucleophile; for GATase activity in catalysis. The region spanning Cys-2 to Asp-218 is the Glutamine amidotransferase type-2 domain. SIS domains lie at Phe-280–Lys-424 and Ile-457–Pro-597. The active-site For Fru-6P isomerization activity is Lys-602.

As to quaternary structure, homodimer.

Its subcellular location is the cytoplasm. The catalysed reaction is D-fructose 6-phosphate + L-glutamine = D-glucosamine 6-phosphate + L-glutamate. Catalyzes the first step in hexosamine metabolism, converting fructose-6P into glucosamine-6P using glutamine as a nitrogen source. The protein is Glutamine--fructose-6-phosphate aminotransferase [isomerizing] of Fusobacterium nucleatum subsp. nucleatum (strain ATCC 25586 / DSM 15643 / BCRC 10681 / CIP 101130 / JCM 8532 / KCTC 2640 / LMG 13131 / VPI 4355).